A 368-amino-acid polypeptide reads, in one-letter code: tRNA/tmRNA (uracil-C(5))-methyltransferase (368 aa).

Positions 192, 220, 225, 241, and 301 each coordinate S-adenosyl-L-methionine. Cysteine 326 functions as the Nucleophile in the catalytic mechanism. Glutamate 360 (proton acceptor) is an active-site residue.

Belongs to the class I-like SAM-binding methyltransferase superfamily. RNA M5U methyltransferase family. TrmA subfamily.

The catalysed reaction is uridine(54) in tRNA + S-adenosyl-L-methionine = 5-methyluridine(54) in tRNA + S-adenosyl-L-homocysteine + H(+). The enzyme catalyses uridine(341) in tmRNA + S-adenosyl-L-methionine = 5-methyluridine(341) in tmRNA + S-adenosyl-L-homocysteine + H(+). Functionally, dual-specificity methyltransferase that catalyzes the formation of 5-methyluridine at position 54 (m5U54) in all tRNAs, and that of position 341 (m5U341) in tmRNA (transfer-mRNA). This Actinobacillus pleuropneumoniae serotype 7 (strain AP76) protein is tRNA/tmRNA (uracil-C(5))-methyltransferase.